Consider the following 316-residue polypeptide: Lipooligosaccharide heptosyltransferase 2 (316 aa).

Belongs to the glycosyltransferase 9 family.

The enzyme catalyses an L-alpha-D-Hep-(1-&gt;5)-[alpha-Kdo-(2-&gt;4)]-alpha-Kdo-(2-&gt;6)-lipid A + ADP-L-glycero-beta-D-manno-heptose = an L-alpha-D-Hep-(1-&gt;3)-L-alpha-D-Hep-(1-&gt;5)-[alpha-Kdo-(2-&gt;4)]-alpha-Kdo-(2-&gt;6)-lipid A + ADP + H(+). The protein operates within bacterial outer membrane biogenesis; LOS core biosynthesis. Functionally, glycosyltransferase involved in the biosynthesis of the core oligosaccharide region of lipooligosaccharide (LOS). Catalyzes the addition of the second heptose unit to the heptosyl-Kdo2-lipid A module. This Campylobacter jejuni subsp. jejuni serotype O:6 (strain 81116 / NCTC 11828) protein is Lipooligosaccharide heptosyltransferase 2.